The chain runs to 364 residues: 3-isopropylmalate dehydrogenase (364 aa).

78–89 (GPKWGTGAVRPE) contributes to the NAD(+) binding site. Residues Arg96, Arg106, Arg135, and Asp224 each contribute to the substrate site. Mg(2+)-binding residues include Asp224, Asp249, and Asp253. 288–299 (GSAPDLPANKVN) lines the NAD(+) pocket.

This sequence belongs to the isocitrate and isopropylmalate dehydrogenases family. In terms of assembly, homodimer. It depends on Mg(2+) as a cofactor. Requires Mn(2+) as cofactor.

Its subcellular location is the cytoplasm. The catalysed reaction is (2R,3S)-3-isopropylmalate + NAD(+) = 4-methyl-2-oxopentanoate + CO2 + NADH. The protein operates within amino-acid biosynthesis; L-leucine biosynthesis; L-leucine from 3-methyl-2-oxobutanoate: step 3/4. Its function is as follows. Catalyzes the oxidation of 3-carboxy-2-hydroxy-4-methylpentanoate (3-isopropylmalate) to 3-carboxy-4-methyl-2-oxopentanoate. The product decarboxylates to 4-methyl-2 oxopentanoate. This chain is 3-isopropylmalate dehydrogenase (LEU2), found in Wickerhamomyces anomalus (strain ATCC 8168 / CBS 5759 / DSM 6766 / JCM 3585 / IAM 12210 / NCYC 432 / NBRC 10213 / NRRL Y-366 / AJ 5027) (Yeast).